Consider the following 276-residue polypeptide: Orotidine 5'-phosphate decarboxylase (276 aa).

K96 acts as the Proton donor in catalysis.

The protein belongs to the OMP decarboxylase family. Type 2 subfamily.

The enzyme catalyses orotidine 5'-phosphate + H(+) = UMP + CO2. Its pathway is pyrimidine metabolism; UMP biosynthesis via de novo pathway; UMP from orotate: step 2/2. This Porphyromonas gingivalis (strain ATCC 33277 / DSM 20709 / CIP 103683 / JCM 12257 / NCTC 11834 / 2561) protein is Orotidine 5'-phosphate decarboxylase.